Reading from the N-terminus, the 370-residue chain is Histidinol-phosphate aminotransferase 1 (370 aa).

The residue at position 222 (K222) is an N6-(pyridoxal phosphate)lysine.

This sequence belongs to the class-II pyridoxal-phosphate-dependent aminotransferase family. Histidinol-phosphate aminotransferase subfamily. As to quaternary structure, homodimer. It depends on pyridoxal 5'-phosphate as a cofactor.

It catalyses the reaction L-histidinol phosphate + 2-oxoglutarate = 3-(imidazol-4-yl)-2-oxopropyl phosphate + L-glutamate. It functions in the pathway amino-acid biosynthesis; L-histidine biosynthesis; L-histidine from 5-phospho-alpha-D-ribose 1-diphosphate: step 7/9. The polypeptide is Histidinol-phosphate aminotransferase 1 (hisC1) (Bacillus anthracis).